A 156-amino-acid polypeptide reads, in one-letter code: Ribosome maturation factor RimP (156 aa).

The protein belongs to the RimP family.

It localises to the cytoplasm. In terms of biological role, required for maturation of 30S ribosomal subunits. The chain is Ribosome maturation factor RimP from Halalkalibacterium halodurans (strain ATCC BAA-125 / DSM 18197 / FERM 7344 / JCM 9153 / C-125) (Bacillus halodurans).